Here is a 605-residue protein sequence, read N- to C-terminus: UvrABC system protein C (605 aa).

The region spanning 15–92 (GLPGCYLMKN…IQKHQPYFNI (78 aa)) is the GIY-YIG domain. The 36-residue stretch at 197–232 (GHAKKDLTQRMEKAAADMAYERAGDLRDQIRYIEAT) folds into the UVR domain.

It belongs to the UvrC family. Interacts with UvrB in an incision complex.

The protein localises to the cytoplasm. In terms of biological role, the UvrABC repair system catalyzes the recognition and processing of DNA lesions. UvrC both incises the 5' and 3' sides of the lesion. The N-terminal half is responsible for the 3' incision and the C-terminal half is responsible for the 5' incision. In Levilactobacillus brevis (strain ATCC 367 / BCRC 12310 / CIP 105137 / JCM 1170 / LMG 11437 / NCIMB 947 / NCTC 947) (Lactobacillus brevis), this protein is UvrABC system protein C.